Here is a 209-residue protein sequence, read N- to C-terminus: Large ribosomal subunit protein uL3 (209 aa).

The disordered stretch occupies residues 132-153; it reads ATHGNSLSHRVPGSIGQNQTPG. Glutamine 150 carries the N5-methylglutamine modification.

Belongs to the universal ribosomal protein uL3 family. As to quaternary structure, part of the 50S ribosomal subunit. Forms a cluster with proteins L14 and L19. In terms of processing, methylated by PrmB.

One of the primary rRNA binding proteins, it binds directly near the 3'-end of the 23S rRNA, where it nucleates assembly of the 50S subunit. In Erwinia tasmaniensis (strain DSM 17950 / CFBP 7177 / CIP 109463 / NCPPB 4357 / Et1/99), this protein is Large ribosomal subunit protein uL3.